We begin with the raw amino-acid sequence, 150 residues long: Large ribosomal subunit protein bL9 (150 aa).

The protein belongs to the bacterial ribosomal protein bL9 family.

Binds to the 23S rRNA. The polypeptide is Large ribosomal subunit protein bL9 (Shewanella oneidensis (strain ATCC 700550 / JCM 31522 / CIP 106686 / LMG 19005 / NCIMB 14063 / MR-1)).